Reading from the N-terminus, the 186-residue chain is Probable GTP-binding protein EngB (186 aa).

Residues 18–186 enclose the EngB-type G domain; it reads SKKEVCLIGR…LMLKIIDVIS (169 aa). Residues 26 to 33, 52 to 56, 69 to 72, 135 to 138, and 166 to 168 contribute to the GTP site; these read GRSNVGKS, GRTVT, DLPG, NKID, and ISA. Mg(2+) is bound by residues Ser33 and Thr54.

Belongs to the TRAFAC class TrmE-Era-EngA-EngB-Septin-like GTPase superfamily. EngB GTPase family. It depends on Mg(2+) as a cofactor.

Its function is as follows. Necessary for normal cell division and for the maintenance of normal septation. This chain is Probable GTP-binding protein EngB, found in Mycoplasmoides gallisepticum (strain R(low / passage 15 / clone 2)) (Mycoplasma gallisepticum).